Reading from the N-terminus, the 120-residue chain is Probable non-functional immunoglobulin kappa variable 2D-24 (120 aa).

Positions 1-19 (MRLLAQLLGLLMLWVPGSS) are cleaved as a signal peptide. The 101-residue stretch at 20–120 (GDIVMTQTPL…YYCTQATQFP (101 aa)) folds into the Ig-like domain. Positions 21–43 (DIVMTQTPLSSPVTLGQPASISF) are framework-1. Residues 44-59 (RSSQSLVHSDGNTYLS) form a complementarity-determining-1 region. A framework-2 region spans residues 60–74 (WLQQRPGQPPRLLIY). The segment at 75 to 81 (KVSNRFS) is complementarity-determining-2. Residues 82–113 (GVPDRFSGSGAGTDFTLKISRVEAEDVGVYYC) form a framework-3 region. Positions 114–120 (TQATQFP) are complementarity-determining-3.

As to quaternary structure, most probably, the immunoglobulin is not assembled due to incorrect folding of light chain. Immunoglobulins are composed of two identical heavy chains and two identical light chains; disulfide-linked.

It localises to the secreted. Its subcellular location is the cell membrane. Functionally, probable non-functional open reading frame (ORF) of V region of the variable domain of immunoglobulin light chains. Non-functional ORF generally cannot participate in the synthesis of a productive immunoglobulin chain due to altered V-(D)-J or switch recombination and/or splicing site (at mRNA level) and/or conserved amino acid change (protein level). Immunoglobulins, also known as antibodies, are membrane-bound or secreted glycoproteins produced by B lymphocytes. In the recognition phase of humoral immunity, the membrane-bound immunoglobulins serve as receptors which, upon binding of a specific antigen, trigger the clonal expansion and differentiation of B lymphocytes into immunoglobulins-secreting plasma cells. Secreted immunoglobulins mediate the effector phase of humoral immunity, which results in the elimination of bound antigens. The antigen binding site is formed by the variable domain of one heavy chain, together with that of its associated light chain. Thus, each immunoglobulin has two antigen binding sites with remarkable affinity for a particular antigen. The variable domains are assembled by a process called V-(D)-J rearrangement and can then be subjected to somatic hypermutations which, after exposure to antigen and selection, allow affinity maturation for a particular antigen. This is Probable non-functional immunoglobulin kappa variable 2D-24 from Homo sapiens (Human).